The chain runs to 1042 residues: Disintegrin and metalloproteinase domain-containing protein unc-71 (1042 aa).

The signal sequence occupies residues 1 to 23 (MICASKITMLGLLVMCTLGGVLG). At 24 to 746 (KVDIRQTTAN…NIGTTLETAT (723 aa)) the chain is on the extracellular side. Residues Asn-103 and Asn-155 are each glycosylated (N-linked (GlcNAc...) asparagine). The Peptidase M12B domain occupies 227-431 (KYVEVALIAD…GNIQCLLNKP (205 aa)). Disulfide bonds link Cys-338/Cys-426, Cys-378/Cys-410, Cys-380/Cys-386, and Cys-496/Cys-516. In terms of domain architecture, Disintegrin spans 437–524 (LRECGNGVVD…DCPPDGHLID (88 aa)). Asn-538 carries N-linked (GlcNAc...) asparagine glycosylation. The region spanning 662 to 699 (SATACPTNNLALLCSGHGHCTTTARCVCFNGWSGVACD) is the EGF-like domain. Cystine bridges form between Cys-666–Cys-681, Cys-675–Cys-687, and Cys-689–Cys-698. An N-linked (GlcNAc...) asparagine glycan is attached at Asn-703. Residues 747–767 (LFAILLGFGVFLLLCLVCLML) form a helical membrane-spanning segment. At 768 to 1042 (CYRRRSVVEI…KLEMTNSMHN (275 aa)) the chain is on the cytoplasmic side. Disordered stretches follow at residues 779 to 809 (KPSDEKDEESPDRQIKFGNMPSYREEKRKRK), 825 to 850 (DERDSTSLRSRDSAGGSQQLVDRRNG), and 980 to 1028 (HDVG…PSLF). Positions 825–836 (DERDSTSLRSRD) are enriched in basic and acidic residues. A compositionally biased stretch (polar residues) spans 1002 to 1027 (DSPTLVNGASSSSTSNNYNFRQSPSL).

It localises to the cell membrane. Its function is as follows. Involved in the migration of sex myoblasts (progenitors of egg-laying muscles), Q neuroblasts and BDU interneurons during development. Involved in axon branching and guidance of neurons including GABAergic type D motor neurons. Promotes sex myoblast migration and positioning independently of gonad attraction cues. May act downstream of mig-13 in order to promote the guidance, migration and positioning of Q neuroblasts and their descendants along the anteroposterior body axis. Required for coordinated movements. This is Disintegrin and metalloproteinase domain-containing protein unc-71 from Caenorhabditis elegans.